We begin with the raw amino-acid sequence, 121 residues long: Holo-[acyl-carrier-protein] synthase (121 aa).

The Mg(2+) site is built by aspartate 6 and glutamate 55.

The protein belongs to the P-Pant transferase superfamily. AcpS family. It depends on Mg(2+) as a cofactor.

It localises to the cytoplasm. The enzyme catalyses apo-[ACP] + CoA = holo-[ACP] + adenosine 3',5'-bisphosphate + H(+). Its function is as follows. Transfers the 4'-phosphopantetheine moiety from coenzyme A to a Ser of acyl-carrier-protein. The polypeptide is Holo-[acyl-carrier-protein] synthase (Chloroherpeton thalassium (strain ATCC 35110 / GB-78)).